Consider the following 138-residue polypeptide: Large ribosomal subunit protein uL16 (138 aa).

Over residues 1 to 13 (MLQPARRKYRKEQ) the composition is skewed to basic residues. The segment at 1 to 20 (MLQPARRKYRKEQKGRNTGV) is disordered.

Belongs to the universal ribosomal protein uL16 family. In terms of assembly, part of the 50S ribosomal subunit.

In terms of biological role, binds 23S rRNA and is also seen to make contacts with the A and possibly P site tRNAs. This chain is Large ribosomal subunit protein uL16, found in Verminephrobacter eiseniae (strain EF01-2).